We begin with the raw amino-acid sequence, 374 residues long: Guanine nucleotide-binding protein subunit alpha-15 (374 aa).

In terms of domain architecture, G-alpha spans 41–374 (EELKLLLLGP…ARYLDEINLL (334 aa)). The interval 44–57 (KLLLLGPGESGKST) is G1 motif. GTP-binding positions include 49-56 (GPGESGKS), 183-189 (LRSRMPT), 208-212 (DVGGQ), 277-280 (NKTD), and alanine 346. Mg(2+) contacts are provided by serine 56 and threonine 189. Residues 181 to 189 (DVLRSRMPT) form a G2 motif region. The interval 204–213 (LRIVDVGGQR) is G3 motif. The tract at residues 273 to 280 (ILFLNKTD) is G4 motif. Residues 344–349 (TCATDT) form a G5 motif region.

This sequence belongs to the G-alpha family. G(q) subfamily. As to quaternary structure, g proteins are composed of 3 units; alpha, beta and gamma. The alpha chain contains the guanine nucleotide binding site. In terms of tissue distribution, expressed primarily in hematopoietic cells. Coexpressed with EDG6 at the same relative levels in all tissues examined, with the highest levels in adult spleen and lung.

In terms of biological role, guanine nucleotide-binding proteins (G proteins) are involved as modulators or transducers in various transmembrane signaling systems. The protein is Guanine nucleotide-binding protein subunit alpha-15 (Gna15) of Mus musculus (Mouse).